Reading from the N-terminus, the 1481-residue chain is Cystic fibrosis transmembrane conductance regulator (1481 aa).

Residues Met1–Phe77 lie on the Cytoplasmic side of the membrane. Residues Phe78–Gln98 traverse the membrane as a helical segment. Residues Phe81–Leu365 enclose the ABC transmembrane type-1 1 domain. At Pro99–Tyr122 the chain is on the extracellular side. The helical transmembrane segment at Leu123–His146 threads the bilayer. Residues His147 to Leu195 are Cytoplasmic-facing. Residues Ala196–Trp216 traverse the membrane as a helical segment. Residues Asp217–Phe222 are Extracellular-facing. Residues Thr223–Met243 traverse the membrane as a helical segment. Residues Met244–Lys298 lie on the Cytoplasmic side of the membrane. A helical transmembrane segment spans residues Ala299–Phe319. The Extracellular portion of the chain corresponds to Leu320 to Thr339. Residues Ile340–Val358 form a helical membrane-spanning segment. Residues Gln359–Ser858 lie on the Cytoplasmic side of the membrane. ATP is bound by residues Trp401, Gly457–Thr464, and Gln492. Residues Ile421–Gly645 form the ABC transporter 1 domain. A lipid anchor (S-palmitoyl cysteine) is attached at Cys523. Phosphoserine occurs at positions 548 and 659. Positions Thr653–Asp831 are disordered R region. Ser669 carries the phosphoserine; by PKA modification. Ser685 is modified (phosphoserine). A Glycyl lysine isopeptide (Lys-Gly) (interchain with G-Cter in ubiquitin) cross-link involves residue Lys687. Ser699 and Ser711 each carry phosphoserine. Thr716 is subject to Phosphothreonine. Phosphoserine occurs at positions 736, 767, 790, 795, and 813. A helical transmembrane segment spans residues Leu859–Val879. Positions Leu859–Ser1155 constitute an ABC transmembrane type-1 2 domain. Residues Val880–Ile918 lie on the Extracellular side of the membrane. 2 N-linked (GlcNAc...) asparagine glycosylation sites follow: Asn894 and Asn898. Residues Tyr919–His939 traverse the membrane as a discontinuously helical segment. Residues Thr940–Thr990 are Cytoplasmic-facing. The helical transmembrane segment at Ile991–Leu1011 threads the bilayer. Topologically, residues Gln1012–Pro1013 are extracellular. The chain crosses the membrane as a helical span at residues Tyr1014–Leu1034. Residues His1035–Thr1095 are Cytoplasmic-facing. Residues Leu1096–Phe1116 form a helical membrane-spanning segment. Residues Ile1117 to Gly1130 are Extracellular-facing. The chain crosses the membrane as a helical span at residues Ile1131–Ile1151. The Cytoplasmic segment spans residues Asp1152 to Leu1481. Positions Met1211–Pro1444 constitute an ABC transporter 2 domain. ATP is bound by residues Tyr1220 and Gly1245–Ser1252. Residues Arg1387–Leu1481 are interaction with GORASP2. A lipid anchor (S-palmitoyl cysteine) is attached at Cys1396. Ser1457 is modified (phosphoserine). The PDZ-binding signature appears at Thr1479 to Leu1481.

The protein belongs to the ABC transporter superfamily. ABCC family. CFTR transporter (TC 3.A.1.202) subfamily. As to quaternary structure, monomer; does not require oligomerization for channel activity. May form oligomers in the membrane. Interacts with SLC26A3, SLC26A6 and NHERF1. Interacts with SHANK2. Interacts with MYO6. Interacts (via C-terminus) with GOPC (via PDZ domain); this promotes CFTR internalization and thereby decreases channel activity. Interacts with SLC4A7 through NHERF1. Found in a complex with MYO5B and RAB11A. Interacts with ANO1. Interacts with SLC26A8. Interacts with AHCYL1; the interaction increases CFTR activity. Interacts with CSE1L. The core-glycosylated form interacts with GORASP2 (via PDZ GRASP-type 1 domain) in respone to ER stress. Interacts with MARCHF2; the interaction leads to CFTR ubiqtuitination and degradation. Interacts with ADGRG2. In terms of processing, N-glycosylated. Phosphorylated; cAMP treatment promotes phosphorylation and activates the channel. Dephosphorylation decreases the ATPase activity (in vitro). Phosphorylation at PKA sites activates the channel. Phosphorylation at PKC sites enhances the response to phosphorylation by PKA. Phosphorylated by AMPK; this inhibits channel activity. Post-translationally, ubiquitinated, leading to its degradation in the lysosome. Deubiquitination by USP10 in early endosomes enhances its endocytic recycling to the cell membrane. Ubiquitinated by RNF185 during ER stress. Ubiquitinated by MARCHF2.

It localises to the apical cell membrane. It is found in the early endosome membrane. The protein localises to the cell membrane. Its subcellular location is the recycling endosome membrane. The protein resides in the endoplasmic reticulum membrane. It localises to the nucleus. The enzyme catalyses ATP + H2O + closed Cl(-) channel = ADP + phosphate + open Cl(-) channel.. It carries out the reaction chloride(in) = chloride(out). The catalysed reaction is hydrogencarbonate(in) = hydrogencarbonate(out). It catalyses the reaction ATP + H2O = ADP + phosphate + H(+). Epithelial ion channel that plays an important role in the regulation of epithelial ion and water transport and fluid homeostasis. Mediates the transport of chloride ions across the cell membrane. Possesses an intrinsic ATPase activity and utilizes ATP to gate its channel; the passive flow of anions through the channel is gated by cycles of ATP binding and hydrolysis by the ATP-binding domains. The ion channel is also permeable to HCO(3)(-); selectivity depends on the extracellular chloride concentration. Exerts its function also by modulating the activity of other ion channels and transporters. Contributes to the regulation of the pH and the ion content of the epithelial fluid layer. Modulates the activity of the epithelial sodium channel (ENaC) complex, in part by regulating the cell surface expression of the ENaC complex. May regulate bicarbonate secretion and salvage in epithelial cells by regulating the transporter SLC4A7. Can inhibit the chloride channel activity of ANO1. Plays a role in the chloride and bicarbonate homeostasis during sperm epididymal maturation and capacitation. In Ovis aries (Sheep), this protein is Cystic fibrosis transmembrane conductance regulator.